Here is a 1216-residue protein sequence, read N- to C-terminus: AF4/FMR2 family member 1 (1216 aa).

Disordered stretches follow at residues 1–52, 68–104, 116–139, 152–217, 244–275, and 352–728; these read MAAH…KGDE, KEFL…GAAS, IHTS…AQPR, PRLT…VSSK, AVTS…MQQK, and SWPP…RTSG. Basic and acidic residues-rich tracts occupy residues 9–35 and 78–99; these read NEDR…EAFP and HRLD…HDRG. Basic and acidic residues predominate over residues 166 to 182; the sequence is RKCDRRAEGDSAPERKL. Residues serine 183, serine 191, and serine 197 each carry the phosphoserine modification. The segment covering 207–217 has biased composition (low complexity); sequence SKAHSSGVSSK. The segment covering 252–266 has biased composition (pro residues); sequence PPQPPCQTFPPPPLP. Positions 383 to 406 are enriched in polar residues; sequence PATQSQKQYDTPSKTHPNPQQGTS. Acidic residues predominate over residues 408 to 424; the sequence is LEDDLQLSDSEDSDTEQ. The span at 429 to 438 shows a compositional bias: pro residues; that stretch reads PPSPPAPPSA. Residues 457-484 are compositionally biased toward acidic residues; sequence ESSESDSSSDSESESSSSDSEEEEENEP. Residue lysine 682 is modified to N6-acetyllysine. The span at 710–728 shows a compositional bias: low complexity; sequence SQGPSHSSRGSSGSVRTSG. A phosphoserine mark is found at serine 755 and serine 760. Disordered regions lie at residues 777-969 and 1094-1125; these read RIPQ…RQQA and APSP…QSSA. The span at 789–808 shows a compositional bias: basic and acidic residues; the sequence is RKAEDKQLSAGKKQDSETKS. Low complexity-rich tracts occupy residues 824–846, 867–886, 902–915, and 1115–1125; these read KKST…SSHT, PPAS…PSRP, PPRS…SSTD, and PASSVGSQSSA.

This sequence belongs to the AF4 family. In terms of assembly, component of the super elongation complex (SEC), at least composed of EAF1, EAF2, CDK9, MLLT3/AF9, AFF (AFF1 or AFF4), the P-TEFb complex and ELL (ELL, ELL2 or ELL3).

It is found in the nucleus. The polypeptide is AF4/FMR2 family member 1 (Aff1) (Mus musculus (Mouse)).